A 483-amino-acid polypeptide reads, in one-letter code: Trigger factor (483 aa).

Positions 162 to 243 constitute a PPIase FKBP-type domain; that stretch reads GDYVSLDLSA…VRGVKEKELP (82 aa). The segment at 459–483 is disordered; that stretch reads AVAPGDGDATVEPVEPVEAETDGNG. Acidic residues predominate over residues 473-483; the sequence is EPVEAETDGNG.

Belongs to the FKBP-type PPIase family. Tig subfamily.

The protein resides in the cytoplasm. It carries out the reaction [protein]-peptidylproline (omega=180) = [protein]-peptidylproline (omega=0). Functionally, involved in protein export. Acts as a chaperone by maintaining the newly synthesized protein in an open conformation. Functions as a peptidyl-prolyl cis-trans isomerase. The chain is Trigger factor from Frankia casuarinae (strain DSM 45818 / CECT 9043 / HFP020203 / CcI3).